The primary structure comprises 33 residues: Ice-structuring protein GS-5 (33 aa).

The residue at position 1 (methionine 1) is a Blocked amino end (Met).

The protein belongs to the type-I AFP family.

Antifreeze proteins lower the blood freezing point. The polypeptide is Ice-structuring protein GS-5 (Myoxocephalus aenaeus (Grubby sculpin)).